The following is a 168-amino-acid chain: uncharacterized protein (168 aa).

The N-terminal 29 residues, Met-1–Cys-29, are a transit peptide targeting the mitochondrion. Over residues Gly-98 to Lys-110 the composition is skewed to basic and acidic residues. The disordered stretch occupies residues Gly-98 to Glu-152. Low complexity predominate over residues Pro-128–Glu-152.

The protein localises to the mitochondrion. This is an uncharacterized protein from Homo sapiens (Human).